A 379-amino-acid polypeptide reads, in one-letter code: Putative 2-hydroxyacid dehydrogenase YGL185C (379 aa).

NAD(+)-binding positions include Ser207–Ile208, Leu291–Arg293, and Asp317. Residue Arg293 is part of the active site. Residue Glu322 is part of the active site. His341 acts as the Proton donor in catalysis. His341–Ser344 serves as a coordination point for NAD(+).

This sequence belongs to the D-isomer specific 2-hydroxyacid dehydrogenase family.

In Saccharomyces cerevisiae (strain ATCC 204508 / S288c) (Baker's yeast), this protein is Putative 2-hydroxyacid dehydrogenase YGL185C.